The chain runs to 206 residues: Small ribosomal subunit protein uS4 (206 aa).

The S4 RNA-binding domain occupies 96–156; it reads CRLDNVVYRM…EKAKNQLRIA (61 aa).

This sequence belongs to the universal ribosomal protein uS4 family. Part of the 30S ribosomal subunit. Contacts protein S5. The interaction surface between S4 and S5 is involved in control of translational fidelity.

Functionally, one of the primary rRNA binding proteins, it binds directly to 16S rRNA where it nucleates assembly of the body of the 30S subunit. Its function is as follows. With S5 and S12 plays an important role in translational accuracy. This chain is Small ribosomal subunit protein uS4, found in Azotobacter vinelandii (strain DJ / ATCC BAA-1303).